We begin with the raw amino-acid sequence, 216 residues long: MDRKLENQKDLLNQDPKVELNSQSVAKNPLNSREVKPIQRRRPLRKNSRDKNSKPEFEERVIAIHRVVKVVKGGRRFSFSAFAVVGNKKGRVGFGHGKANEVQDAVKKAIKDAQNRLVSVPIYRKSTVPHEIAVKYLASKILIKPAPRGKGIVASNTVRAVVELAGYTDIYTKTYGSRTKINVVRATLKALLKLRTINQVAELRDLSPQQAQAQKV.

Residues 1–55 are disordered; that stretch reads MDRKLENQKDLLNQDPKVELNSQSVAKNPLNSREVKPIQRRRPLRKNSRDKNSKP. A compositionally biased stretch (polar residues) spans 20–31; it reads LNSQSVAKNPLN. Positions 57–120 constitute an S5 DRBM domain; that stretch reads FEERVIAIHR…KDAQNRLVSV (64 aa).

This sequence belongs to the universal ribosomal protein uS5 family. As to quaternary structure, part of the 30S ribosomal subunit. Contacts proteins S4 and S8.

Functionally, with S4 and S12 plays an important role in translational accuracy. In terms of biological role, located at the back of the 30S subunit body where it stabilizes the conformation of the head with respect to the body. In Mesomycoplasma hyopneumoniae (strain J / ATCC 25934 / NCTC 10110) (Mycoplasma hyopneumoniae), this protein is Small ribosomal subunit protein uS5.